The chain runs to 142 residues: Probable pilin MJ0832.1 (142 aa).

Positions Met-1–Gly-8 are excised as a propeptide. Positions Gln-9 to Leu-17 match the QXSXEXXXL motif.

In terms of processing, the N-terminus is cleaved by the prepilin peptidase EppA, which recognizes the class III signal sequence.

Its subcellular location is the secreted. The protein localises to the cell surface. It is found in the fimbrium. The protein is Probable pilin MJ0832.1 of Methanocaldococcus jannaschii (strain ATCC 43067 / DSM 2661 / JAL-1 / JCM 10045 / NBRC 100440) (Methanococcus jannaschii).